The primary structure comprises 198 residues: Peroxynitrite isomerase (198 aa).

Positions 20–26 (GVWEGTG) match the GXWXGXG motif. Residue H189 coordinates heme b.

It belongs to the nitrobindin family. As to quaternary structure, homodimer. Heme b serves as cofactor.

The enzyme catalyses peroxynitrite = nitrate. It functions in the pathway nitrogen metabolism. Functionally, heme-binding protein able to scavenge peroxynitrite and to protect free L-tyrosine against peroxynitrite-mediated nitration, by acting as a peroxynitrite isomerase that converts peroxynitrite to nitrate. Therefore, this protein likely plays a role in peroxynitrite sensing and in the detoxification of reactive nitrogen and oxygen species (RNS and ROS, respectively). Is able to bind nitric oxide (NO) in vitro, but may act as a sensor of peroxynitrite levels in vivo. The polypeptide is Peroxynitrite isomerase (Leifsonia xyli subsp. xyli (strain CTCB07)).